A 206-amino-acid chain; its full sequence is Probable GTP-binding protein EngB (206 aa).

The EngB-type G domain maps to 23-202 (HTAEVAFVGR…WGALLDTFGK (180 aa)). GTP-binding positions include 31–38 (GRSNVGKS), 58–62 (GRTRT), 83–86 (DLPG), 150–153 (TKVD), and 181–183 (FSS). Positions 38 and 60 each coordinate Mg(2+).

This sequence belongs to the TRAFAC class TrmE-Era-EngA-EngB-Septin-like GTPase superfamily. EngB GTPase family. Mg(2+) serves as cofactor.

In terms of biological role, necessary for normal cell division and for the maintenance of normal septation. This is Probable GTP-binding protein EngB from Myxococcus xanthus (strain DK1622).